We begin with the raw amino-acid sequence, 524 residues long: Secologanin synthase 1 (524 aa).

The Lumenal segment spans residues Met-1–Ala-11. A helical transmembrane segment spans residues Ile-12–Trp-32. Topologically, residues Phe-33–Ser-524 are cytoplasmic. Cys-470 is a binding site for heme.

The protein belongs to the cytochrome P450 family. The cofactor is heme. Upper and lower leaf epidermis.

The protein localises to the endoplasmic reticulum membrane. It carries out the reaction loganin + reduced [NADPH--hemoprotein reductase] + O2 = secologanin + oxidized [NADPH--hemoprotein reductase] + 2 H2O + H(+). The enzyme catalyses secologanin + reduced [NADPH--hemoprotein reductase] + O2 = secoxyloganin + oxidized [NADPH--hemoprotein reductase] + H2O + 2 H(+). The protein operates within alkaloid biosynthesis; secologanin biosynthesis. In terms of biological role, component of the seco-iridoid and derivatives monoterpenoid indole alkaloids (MIAs, e.g. secologanin) biosynthesis pathway. Catalyzes the conversion of loganin into secologanin. Catalyzes the conversion of secologanin into secoxyloganin. The polypeptide is Secologanin synthase 1 (Catharanthus roseus (Madagascar periwinkle)).